The sequence spans 732 residues: MDLNDLKFIEEQLGRKPNDVEIGMFENLWSEHCSYRSTKKLLSMFGKTVKENQNIVVGPGDDAALIKIDDETDLCVAMAMESHNHPSYIDPYNGAATGVGGIVRDIISMNAKPIALLNALRFGDINGEEKDKVRWLVEGVVDGIRDYGNRIGVPNVGGECEFDKSYDYNNLVNVVCIGLVKEGDIVTGKAKETDLTLILVGSTGRDGIGGASFASKDLTSESEGDRPSVQIGDAFTEKCVIDSTLEACATKKVKAIKDLGAAGITSSCSELCYSGGVGAELYLENVILRDEGMTAYEIMVSESQERMLLAVEKGSEEEIIKIFEKYELPVSIIGKTTDTKRFFVKMNDEVVVDLPLDLLCEATLTDSEEKETILETPDNKENIAEPEPAELNNILLKLLKSPNINSKKWIYEQYDHEVQLNTVVRPGKDASVLRLKEAHPKALALVADCNPTYCKLNPYGGSLNLVCESVRNLATVGAKPIGMLDNLNFGNPEKPERFYQIKKCIEGLADGAEIIGVPVVGGNVSLYNETVIDGKDYPINPTPVISIVGTIENINNIPKGAKEGDILIITAPTKDEMGGTEYYKQIHNTEEGIVPKANLEVEKEIYSKVCELVNNGLINEAVDCSKGGLGVAISKLCMTNNIGVELDLGDYNTNGLRNDILLFSESSGRIILSVDKNNADKVVKELNGAIIGTVKGNELKIKLNDNELINLPIEEMKNKYENAFSEMMGENI.

Residue His-32 is part of the active site. Tyr-35 contacts ATP. Glu-81 serves as a coordination point for Mg(2+). Substrate is bound by residues 82 to 85 (SHNH) and Arg-104. His-83 functions as the Proton acceptor in the catalytic mechanism. Mg(2+) is bound at residue Asp-105. Gln-230 lines the substrate pocket. Asp-258 lines the Mg(2+) pocket. 302 to 304 (ESQ) contacts substrate. Residues Asp-485 and Gly-522 each coordinate ATP. Residue Asn-523 coordinates Mg(2+). Residue Ser-525 coordinates substrate.

It belongs to the FGAMS family. Monomer. Part of the FGAM synthase complex composed of 1 PurL, 1 PurQ and 2 PurS subunits.

It is found in the cytoplasm. The catalysed reaction is N(2)-formyl-N(1)-(5-phospho-beta-D-ribosyl)glycinamide + L-glutamine + ATP + H2O = 2-formamido-N(1)-(5-O-phospho-beta-D-ribosyl)acetamidine + L-glutamate + ADP + phosphate + H(+). It functions in the pathway purine metabolism; IMP biosynthesis via de novo pathway; 5-amino-1-(5-phospho-D-ribosyl)imidazole from N(2)-formyl-N(1)-(5-phospho-D-ribosyl)glycinamide: step 1/2. Part of the phosphoribosylformylglycinamidine synthase complex involved in the purines biosynthetic pathway. Catalyzes the ATP-dependent conversion of formylglycinamide ribonucleotide (FGAR) and glutamine to yield formylglycinamidine ribonucleotide (FGAM) and glutamate. The FGAM synthase complex is composed of three subunits. PurQ produces an ammonia molecule by converting glutamine to glutamate. PurL transfers the ammonia molecule to FGAR to form FGAM in an ATP-dependent manner. PurS interacts with PurQ and PurL and is thought to assist in the transfer of the ammonia molecule from PurQ to PurL. This is Phosphoribosylformylglycinamidine synthase subunit PurL from Methanococcus aeolicus (strain ATCC BAA-1280 / DSM 17508 / OCM 812 / Nankai-3).